Here is a 323-residue protein sequence, read N- to C-terminus: Aspartate carbamoyltransferase catalytic subunit (323 aa).

R55 and T56 together coordinate carbamoyl phosphate. L-aspartate is bound at residue K83. R105, H138, and Q141 together coordinate carbamoyl phosphate. 2 residues coordinate L-aspartate: R181 and R235. Residues G276 and P277 each coordinate carbamoyl phosphate.

This sequence belongs to the aspartate/ornithine carbamoyltransferase superfamily. ATCase family. Heterododecamer (2C3:3R2) of six catalytic PyrB chains organized as two trimers (C3), and six regulatory PyrI chains organized as three dimers (R2).

The enzyme catalyses carbamoyl phosphate + L-aspartate = N-carbamoyl-L-aspartate + phosphate + H(+). It participates in pyrimidine metabolism; UMP biosynthesis via de novo pathway; (S)-dihydroorotate from bicarbonate: step 2/3. Functionally, catalyzes the condensation of carbamoyl phosphate and aspartate to form carbamoyl aspartate and inorganic phosphate, the committed step in the de novo pyrimidine nucleotide biosynthesis pathway. This chain is Aspartate carbamoyltransferase catalytic subunit, found in Corynebacterium aurimucosum (strain ATCC 700975 / DSM 44827 / CIP 107346 / CN-1) (Corynebacterium nigricans).